An 810-amino-acid polypeptide reads, in one-letter code: Phenylalanine--tRNA ligase beta subunit (810 aa).

The region spanning 39-154 is the tRNA-binding domain; it reads APPTEKIVVG…EGTPVGQDIR (116 aa). In terms of domain architecture, B5 spans 405 to 480; that stretch reads PQRAPVSMRA…RIYGFEKIPA (76 aa). Asp458, Asp464, Glu467, and Glu468 together coordinate Mg(2+). An FDX-ACB domain is found at 707–809; it reads SKFPPVRRDI…MARVYGARLR (103 aa).

It belongs to the phenylalanyl-tRNA synthetase beta subunit family. Type 1 subfamily. In terms of assembly, tetramer of two alpha and two beta subunits. The cofactor is Mg(2+).

It is found in the cytoplasm. It catalyses the reaction tRNA(Phe) + L-phenylalanine + ATP = L-phenylalanyl-tRNA(Phe) + AMP + diphosphate + H(+). The protein is Phenylalanine--tRNA ligase beta subunit of Burkholderia mallei (strain ATCC 23344).